The sequence spans 259 residues: MLPTSSPQIHRNGSLSERDAARHTAGAKRYKYLRRLLHFRQMDFEFAVWQMLYLFTSPQKVYRNFHYRKQTKDQWARDDPAFLVLLSIWLCVSTVGFGLVLDMGFVETLTLLLWVVFIDCIGVGLLISTLMWFVTNKYLMKHPNRDYDVEWGYAFDVHLNAFYPLLVILHFLQLFFINHVVVISSDWFLGYFVGNTMWLIAIGYYVYITFLGYSALPFLKNTVVLLYPFALLGLLYVLSISLGWNFTKGLCWFYKHRVQ.

Residues 1-15 (MLPTSSPQIHRNGSL) show a composition bias toward polar residues. Residues 1–22 (MLPTSSPQIHRNGSLSERDAAR) form a disordered region. The Cytoplasmic segment spans residues 1–80 (MLPTSSPQIH…TKDQWARDDP (80 aa)). A helical membrane pass occupies residues 81–101 (AFLVLLSIWLCVSTVGFGLVL). Residues 102–110 (DMGFVETLT) are Lumenal-facing. A helical transmembrane segment spans residues 111–131 (LLLWVVFIDCIGVGLLISTLM). Topologically, residues 132–162 (WFVTNKYLMKHPNRDYDVEWGYAFDVHLNAF) are cytoplasmic. Residues 163–183 (YPLLVILHFLQLFFINHVVVI) form a helical membrane-spanning segment. Residues 184–198 (SSDWFLGYFVGNTMW) lie on the Lumenal side of the membrane. Residues 199 to 219 (LIAIGYYVYITFLGYSALPFL) traverse the membrane as a helical segment. Topologically, residues 220–222 (KNT) are cytoplasmic. Residues 223–243 (VVLLYPFALLGLLYVLSISLG) form a helical membrane-spanning segment. Over 244–259 (WNFTKGLCWFYKHRVQ) the chain is Lumenal.

This sequence belongs to the unc-50 family.

It localises to the nucleus inner membrane. Its subcellular location is the golgi apparatus membrane. Functionally, involved in the cell surface expression of neuronal nicotinic receptors. Binds RNA. This Danio rerio (Zebrafish) protein is Protein unc-50 homolog (unc50).